The chain runs to 277 residues: MNKYTVKEIQALLQQIDDENAPLFKEIVQDERKSVQKLVARWYKQKKQEEQAKRQWQEMSRYERQLFEQGIEYIAGIDEAGRGPLAGPVVAAAVMLPKDAYIPGLNDSKKLSEAKREMLFHMIQSCAISIGIGVVTAAEIDEMNIYEATKKAMIKAVEQLSPKPDYLLIDAMTLPISTPQQSIVKGDANSVSIAASSIIAKVTRDHFMKQLAKQYPQYGFEKNMGYGTAQHLEAIRVYGTIDEHRRSFSPIKEMIEMKKEGKEYDQTHRQSIAGFSS.

The region spanning 72–260 is the RNase H type-2 domain; it reads EYIAGIDEAG…IKEMIEMKKE (189 aa). Residues D78, E79, and D170 each contribute to the a divalent metal cation site.

The protein belongs to the RNase HII family. Requires Mn(2+) as cofactor. Mg(2+) is required as a cofactor.

The protein localises to the cytoplasm. It catalyses the reaction Endonucleolytic cleavage to 5'-phosphomonoester.. Its function is as follows. Endonuclease that specifically degrades the RNA of RNA-DNA hybrids. The protein is Ribonuclease HII of Geobacillus sp. (strain WCH70).